A 460-amino-acid chain; its full sequence is Light-independent protochlorophyllide reductase subunit N (460 aa).

3 residues coordinate [4Fe-4S] cluster: cysteine 22, cysteine 47, and cysteine 107.

This sequence belongs to the BchN/ChlN family. As to quaternary structure, protochlorophyllide reductase is composed of three subunits; ChlL, ChlN and ChlB. Forms a heterotetramer of two ChlB and two ChlN subunits. Requires [4Fe-4S] cluster as cofactor.

The catalysed reaction is chlorophyllide a + oxidized 2[4Fe-4S]-[ferredoxin] + 2 ADP + 2 phosphate = protochlorophyllide a + reduced 2[4Fe-4S]-[ferredoxin] + 2 ATP + 2 H2O. It participates in porphyrin-containing compound metabolism; chlorophyll biosynthesis (light-independent). Functionally, component of the dark-operative protochlorophyllide reductase (DPOR) that uses Mg-ATP and reduced ferredoxin to reduce ring D of protochlorophyllide (Pchlide) to form chlorophyllide a (Chlide). This reaction is light-independent. The NB-protein (ChlN-ChlB) is the catalytic component of the complex. In Thermosynechococcus vestitus (strain NIES-2133 / IAM M-273 / BP-1), this protein is Light-independent protochlorophyllide reductase subunit N.